The following is a 358-amino-acid chain: MISREEAINFLNSTSSKDILDKLAQINNTFKREYITYSKNVFIPLSKWCRNKCGYCIFREDKPSLMKPNEVKEILLKGDRLGCREALFTFGEHVDENKEIKEQLKSMGYDNILEYLYDLEEWTLNNTSLLPHTNCGILNYDELKMLKDVNASMGLMLENASERLMNTIAHKHSPGKHPKLRIEMIENAGKLKIPFTTGLLIGIGETNEEIVDSLFKIKEIHEKYGHIQEVIIQNFRAKKGIPMENFKEPSPIKMLKVIILAKLILDDISIQIPPNLNRETGQLFLLAGVDDWGGVSPLTRDYVNPEAEWPEIKELREWTEELGLKLKMRLPVYDKYISEEWLSEKVYNKIIEMGWLKE.

The Radical SAM core domain maps to isoleucine 35 to asparagine 275. [4Fe-4S] cluster is bound by residues cysteine 49, cysteine 53, and cysteine 56.

It belongs to the radical SAM superfamily. CofG family. As to quaternary structure, consists of two subunits, CofG and CofH. It depends on [4Fe-4S] cluster as a cofactor.

The catalysed reaction is 5-amino-5-(4-hydroxybenzyl)-6-(D-ribitylimino)-5,6-dihydrouracil + S-adenosyl-L-methionine = 7,8-didemethyl-8-hydroxy-5-deazariboflavin + 5'-deoxyadenosine + L-methionine + NH4(+) + H(+). The protein operates within cofactor biosynthesis; coenzyme F0 biosynthesis. In terms of biological role, catalyzes the radical-mediated synthesis of 7,8-didemethyl-8-hydroxy-5-deazariboflavin (FO) from 5-amino-5-(4-hydroxybenzyl)-6-(D-ribitylimino)-5,6-dihydrouracil. The chain is 7,8-didemethyl-8-hydroxy-5-deazariboflavin synthase (cofG) from Methanocaldococcus jannaschii (strain ATCC 43067 / DSM 2661 / JAL-1 / JCM 10045 / NBRC 100440) (Methanococcus jannaschii).